The sequence spans 685 residues: Translation initiation factor IF-2 (685 aa).

Residues I60–P79 form a disordered region. Residues K64–P79 are compositionally biased toward basic and acidic residues. The tr-type G domain occupies N175–V352. The segment at G184–T191 is G1. G184 to T191 is a binding site for GTP. Positions G209–S213 are G2. Positions D230–G233 are G3. Residues D230–H234 and N284–D287 contribute to the GTP site. Residues N284 to D287 form a G4 region. Residues S321–R323 are G5.

Belongs to the TRAFAC class translation factor GTPase superfamily. Classic translation factor GTPase family. IF-2 subfamily.

It is found in the cytoplasm. In terms of biological role, one of the essential components for the initiation of protein synthesis. Protects formylmethionyl-tRNA from spontaneous hydrolysis and promotes its binding to the 30S ribosomal subunits. Also involved in the hydrolysis of GTP during the formation of the 70S ribosomal complex. This chain is Translation initiation factor IF-2, found in Fervidobacterium nodosum (strain ATCC 35602 / DSM 5306 / Rt17-B1).